The primary structure comprises 279 residues: Undecaprenyl-diphosphatase (279 aa).

The next 8 helical transmembrane spans lie at Thr-17–Phe-37, Ala-46–Leu-66, Phe-92–Leu-112, Ser-123–Val-143, Ile-156–Val-176, Ala-197–Tyr-217, Glu-226–Ile-246, and Ser-257–Val-277.

This sequence belongs to the UppP family.

Its subcellular location is the cell inner membrane. It carries out the reaction di-trans,octa-cis-undecaprenyl diphosphate + H2O = di-trans,octa-cis-undecaprenyl phosphate + phosphate + H(+). Catalyzes the dephosphorylation of undecaprenyl diphosphate (UPP). Confers resistance to bacitracin. This is Undecaprenyl-diphosphatase from Leptospira biflexa serovar Patoc (strain Patoc 1 / ATCC 23582 / Paris).